Here is a 447-residue protein sequence, read N- to C-terminus: Argininosuccinate synthase (447 aa).

ATP contacts are provided by residues 17–25 and Ala43; that span reads AFSGGLDTS. L-citrulline is bound at residue Tyr99. ATP contacts are provided by Gly129 and Thr131. L-aspartate-binding residues include Thr131, Asn135, and Asp136. Asn135 serves as a coordination point for L-citrulline. Asp136 lines the ATP pocket. L-citrulline is bound by residues Arg139 and Ser192. Asp194 serves as a coordination point for ATP. L-citrulline-binding residues include Thr201, Glu203, and Glu280.

Belongs to the argininosuccinate synthase family. Type 2 subfamily. Homotetramer.

The protein localises to the cytoplasm. The catalysed reaction is L-citrulline + L-aspartate + ATP = 2-(N(omega)-L-arginino)succinate + AMP + diphosphate + H(+). It participates in amino-acid biosynthesis; L-arginine biosynthesis; L-arginine from L-ornithine and carbamoyl phosphate: step 2/3. This chain is Argininosuccinate synthase, found in Shigella boydii serotype 18 (strain CDC 3083-94 / BS512).